A 367-amino-acid chain; its full sequence is Putative ionic transporter y4hA (367 aa).

The next 11 helical transmembrane spans lie at 12–32 (VPLWSWIIPLFGCVIAAMTLA), 39–59 (SVVLLLMSAGLLTGAVFASVH), 74–94 (AILLAVCVTIIEVAIIGSLML), 108–128 (VFAAVMIVLNGVIGLCLVLGG), 143–163 (AALAVLGTLATLSLVLPNFVT), 172–192 (AIQLVVIGLVSVVLYGVFLFV), 221–241 (LAAGALLVLALIAVILLAMLL), 249–269 (VEALGLPQAVVGVTIAGVVLL), 291–311 (VLGSALASIGVTIPVVAAISV), 318–338 (ALGLAPQNLIMLILTLFVGTI), and 347–367 (VLQGAVHLAIFTVFLLLSAIP).

This sequence belongs to the Ca(2+):cation antiporter (CaCA) (TC 2.A.19) family.

The protein resides in the cell membrane. Functionally, possible cation transporter. This Sinorhizobium fredii (strain NBRC 101917 / NGR234) protein is Putative ionic transporter y4hA.